The sequence spans 276 residues: Pantothenate synthetase (276 aa).

Residue 27–34 (MGALHKGH) coordinates ATP. Residue His-34 is the Proton donor of the active site. Gln-58 contacts (R)-pantoate. Beta-alanine is bound at residue Gln-58. An ATP-binding site is contributed by 147-150 (GKKD). (R)-pantoate is bound at residue Gln-153. ATP contacts are provided by residues Val-176 and 184–187 (LSSR).

This sequence belongs to the pantothenate synthetase family. As to quaternary structure, homodimer.

It is found in the cytoplasm. It carries out the reaction (R)-pantoate + beta-alanine + ATP = (R)-pantothenate + AMP + diphosphate + H(+). It participates in cofactor biosynthesis; (R)-pantothenate biosynthesis; (R)-pantothenate from (R)-pantoate and beta-alanine: step 1/1. Its function is as follows. Catalyzes the condensation of pantoate with beta-alanine in an ATP-dependent reaction via a pantoyl-adenylate intermediate. This chain is Pantothenate synthetase, found in Helicobacter acinonychis (strain Sheeba).